A 395-amino-acid chain; its full sequence is Protein NDRG1 (395 aa).

The disordered stretch occupies residues 325–395 (RSRTGSAASS…NTPKSMEISC (71 aa)). Residues 326-339 (SRTGSAASSSSQDG) are compositionally biased toward low complexity. A run of 4 repeats spans residues 339–348 (GNRSRSHTNE), 349–358 (GSRSRSHTGD), 359–368 (GNRSRAHTGD), and 369–378 (GNRSRSHTDS). The tract at residues 339–378 (GNRSRSHTNEGSRSRSHTGDGNRSRAHTGDGNRSRSHTDS) is 4 X 10 AA tandem repeats of G-[NS]-R-S-R-[AS]-H-T-[DGN]-[DES]. Residues 345–376 (HTNEGSRSRSHTGDGNRSRAHTGDGNRSRSHT) are compositionally biased toward basic and acidic residues. Polar residues predominate over residues 377 to 389 (DSNNTNSEHNTPK).

Belongs to the NDRG family.

Functionally, may be involved in pronephros development, after specification of the pronephros. The protein is Protein NDRG1 of Xenopus tropicalis (Western clawed frog).